The primary structure comprises 199 residues: dITP/XTP pyrophosphatase (199 aa).

7–12 (SNNRGK) is a binding site for substrate. Residue Asp68 is the Proton acceptor of the active site. Asp68 lines the Mg(2+) pocket. Residues Ala69, 154-157 (FGFD), Lys177, and 182-183 (HR) contribute to the substrate site.

This sequence belongs to the HAM1 NTPase family. Homodimer. The cofactor is Mg(2+).

It carries out the reaction XTP + H2O = XMP + diphosphate + H(+). The enzyme catalyses dITP + H2O = dIMP + diphosphate + H(+). It catalyses the reaction ITP + H2O = IMP + diphosphate + H(+). In terms of biological role, pyrophosphatase that catalyzes the hydrolysis of nucleoside triphosphates to their monophosphate derivatives, with a high preference for the non-canonical purine nucleotides XTP (xanthosine triphosphate), dITP (deoxyinosine triphosphate) and ITP. Seems to function as a house-cleaning enzyme that removes non-canonical purine nucleotides from the nucleotide pool, thus preventing their incorporation into DNA/RNA and avoiding chromosomal lesions. This chain is dITP/XTP pyrophosphatase, found in Albidiferax ferrireducens (strain ATCC BAA-621 / DSM 15236 / T118) (Rhodoferax ferrireducens).